A 150-amino-acid polypeptide reads, in one-letter code: Large ribosomal subunit protein bL9 (150 aa).

Belongs to the bacterial ribosomal protein bL9 family.

Functionally, binds to the 23S rRNA. This Wigglesworthia glossinidia brevipalpis protein is Large ribosomal subunit protein bL9.